The primary structure comprises 464 residues: Siroheme synthase (464 aa).

Positions 1–203 (MDYLPLFHKL…GQGAEAERLL (203 aa)) are precorrin-2 dehydrogenase /sirohydrochlorin ferrochelatase. NAD(+) is bound by residues 22–23 (EI) and 43–44 (PE). Serine 128 bears the Phosphoserine mark. The uroporphyrinogen-III C-methyltransferase stretch occupies residues 216–464 (GEVYLVGAGP…AWFEGSQQDQ (249 aa)). Proline 225 is a binding site for S-adenosyl-L-methionine. Aspartate 248 serves as the catalytic Proton acceptor. Lysine 270 functions as the Proton donor in the catalytic mechanism. S-adenosyl-L-methionine contacts are provided by residues 301–303 (GGD), isoleucine 306, 331–332 (TA), methionine 383, and glycine 412.

It in the N-terminal section; belongs to the precorrin-2 dehydrogenase / sirohydrochlorin ferrochelatase family. The protein in the C-terminal section; belongs to the precorrin methyltransferase family.

The catalysed reaction is uroporphyrinogen III + 2 S-adenosyl-L-methionine = precorrin-2 + 2 S-adenosyl-L-homocysteine + H(+). The enzyme catalyses precorrin-2 + NAD(+) = sirohydrochlorin + NADH + 2 H(+). It carries out the reaction siroheme + 2 H(+) = sirohydrochlorin + Fe(2+). It participates in cofactor biosynthesis; adenosylcobalamin biosynthesis; precorrin-2 from uroporphyrinogen III: step 1/1. It functions in the pathway cofactor biosynthesis; adenosylcobalamin biosynthesis; sirohydrochlorin from precorrin-2: step 1/1. Its pathway is porphyrin-containing compound metabolism; siroheme biosynthesis; precorrin-2 from uroporphyrinogen III: step 1/1. The protein operates within porphyrin-containing compound metabolism; siroheme biosynthesis; siroheme from sirohydrochlorin: step 1/1. It participates in porphyrin-containing compound metabolism; siroheme biosynthesis; sirohydrochlorin from precorrin-2: step 1/1. Its function is as follows. Multifunctional enzyme that catalyzes the SAM-dependent methylations of uroporphyrinogen III at position C-2 and C-7 to form precorrin-2 via precorrin-1. Then it catalyzes the NAD-dependent ring dehydrogenation of precorrin-2 to yield sirohydrochlorin. Finally, it catalyzes the ferrochelation of sirohydrochlorin to yield siroheme. The protein is Siroheme synthase of Pseudomonas putida (strain W619).